Consider the following 108-residue polypeptide: N(4)-acetylcytidine amidohydrolase (108 aa).

One can recognise an ASCH domain in the interval 5–102 (ITFFQRLERS…NDLFFISFRV (98 aa)). The active-site Proton acceptor is K20. T23 (nucleophile) is an active-site residue. E73 acts as the Proton donor in catalysis.

This sequence belongs to the N(4)-acetylcytidine amidohydrolase family.

The catalysed reaction is N(4)-acetylcytidine + H2O = cytidine + acetate + H(+). The enzyme catalyses N(4)-acetyl-2'-deoxycytidine + H2O = 2'-deoxycytidine + acetate + H(+). It catalyses the reaction N(4)-acetylcytosine + H2O = cytosine + acetate + H(+). In terms of biological role, catalyzes the hydrolysis of N(4)-acetylcytidine (ac4C). The chain is N(4)-acetylcytidine amidohydrolase from Moritella marina (Vibrio marinus).